A 2588-amino-acid chain; its full sequence is uncharacterized protein (2588 aa).

Over residues 1–11 (MSFKNNEKYMD) the composition is skewed to basic and acidic residues. 9 disordered regions span residues 1-56 (MSFK…NISN), 442-598 (ELES…HFSN), 774-801 (KKEKKKTKTDMDNNNNNNNNNNNDNNNI), 1303-1357 (DSHD…KKKY), 1631-1662 (QNSNNKSNDSLKMSYSKKKKQHTNEHMNHHQN), 1685-1705 (NNNNNNNNNNNNNDDNTKDQP), 1820-1856 (KLNVQTNDQGERQDERNIDHEDEPVSSNTEDDHEEND), 2317-2342 (KKKKELDDVEKEGQPKMGVGNDDNIN), and 2415-2437 (YDNNNNNDNNNDNNNDNNNNSHT). A compositionally biased stretch (low complexity) spans 42-56 (NNNNNNNNNNSNISN). Positions 413–452 (YREIEENEKVMEMQRRENELLEEKKRLKQELESYHDDSST) form a coiled coil. Over residues 451-462 (STDDDSSADEQQ) the composition is skewed to acidic residues. 2 stretches are compositionally biased toward basic and acidic residues: residues 463–515 (DERR…KNDD) and 522–588 (DHTH…DHTH). Residues 785 to 801 (DNNNNNNNNNNNDNNNI) show a composition bias toward low complexity. Acidic residues predominate over residues 1308-1318 (NNDDSVNDSND). Residues 1319–1331 (DTNNVNVNVNVND) are compositionally biased toward low complexity. A compositionally biased stretch (basic residues) spans 1347 to 1356 (DKKKKHKKKK). A compositionally biased stretch (polar residues) spans 1631–1643 (QNSNNKSNDSLKM). Positions 1685–1698 (NNNNNNNNNNNNND) are enriched in low complexity. Residues 1828-1838 (QGERQDERNID) are compositionally biased toward basic and acidic residues. Residues 1839–1856 (HEDEPVSSNTEDDHEEND) show a composition bias toward acidic residues. Over residues 2416-2434 (DNNNNNDNNNDNNNDNNNN) the composition is skewed to low complexity.

This is an uncharacterized protein from Plasmodium falciparum (isolate 3D7).